We begin with the raw amino-acid sequence, 89 residues long: Small ribosomal subunit protein uS17 (89 aa).

This sequence belongs to the universal ribosomal protein uS17 family. In terms of assembly, part of the 30S ribosomal subunit.

One of the primary rRNA binding proteins, it binds specifically to the 5'-end of 16S ribosomal RNA. The polypeptide is Small ribosomal subunit protein uS17 (Xanthomonas campestris pv. campestris (strain 8004)).